Consider the following 114-residue polypeptide: Cell cycle protein GpsB (114 aa).

Positions 42–77 (YQKMADMNNEVVKLSEENHKLKKELEELRLRVATSR) form a coiled coil. Residues 74 to 99 (ATSRPQDNKSFSSNNTTTNTSSNNVD) are disordered. Residues 85–97 (SSNNTTTNTSSNN) are compositionally biased toward low complexity.

The protein belongs to the GpsB family. In terms of assembly, forms polymers through the coiled coil domains. Interacts with PBP1, MreC and EzrA.

It localises to the cytoplasm. Divisome component that associates with the complex late in its assembly, after the Z-ring is formed, and is dependent on DivIC and PBP2B for its recruitment to the divisome. Together with EzrA, is a key component of the system that regulates PBP1 localization during cell cycle progression. Its main role could be the removal of PBP1 from the cell pole after pole maturation is completed. Also contributes to the recruitment of PBP1 to the division complex. Not essential for septum formation. In Staphylococcus aureus (strain Mu3 / ATCC 700698), this protein is Cell cycle protein GpsB.